The chain runs to 125 residues: Photoactive yellow protein (125 aa).

Positions 23 to 86 (LDGLAFGAIQ…GKFKEGVASG (64 aa)) constitute a PAS domain. S-(4-hydroxycinnamyl)cysteine is present on Cys-69.

The protein belongs to the photoactive yellow protein family. Monomer. The 4-hydroxycinnamic acid (p-coumaric acid) chromophore is covalently bound via a thioester linkage.

Functionally, photoactive blue light protein. Probably functions as a photoreceptor for a negative phototaxis response. The chain is Photoactive yellow protein (pyp) from Halorhodospira halophila (Ectothiorhodospira halophila).